The sequence spans 493 residues: Cobyric acid synthase (493 aa).

In terms of domain architecture, GATase cobBQ-type spans 252-440 (PVKIVVLRLR…IHGIFESDSL (189 aa)). Cys333 functions as the Nucleophile in the catalytic mechanism. Residue His432 is part of the active site.

The protein belongs to the CobB/CobQ family. CobQ subfamily.

It participates in cofactor biosynthesis; adenosylcobalamin biosynthesis. In terms of biological role, catalyzes amidations at positions B, D, E, and G on adenosylcobyrinic A,C-diamide. NH(2) groups are provided by glutamine, and one molecule of ATP is hydrogenolyzed for each amidation. This Thermodesulfovibrio yellowstonii (strain ATCC 51303 / DSM 11347 / YP87) protein is Cobyric acid synthase.